The following is a 318-amino-acid chain: NAD kinase (318 aa).

Aspartate 80 acts as the Proton acceptor in catalysis. NAD(+) is bound by residues 80–81 (DG), arginine 85, 155–156 (NE), aspartate 185, and 196–201 (TAYAFS).

The protein belongs to the NAD kinase family. A divalent metal cation serves as cofactor.

It localises to the cytoplasm. It carries out the reaction NAD(+) + ATP = ADP + NADP(+) + H(+). Involved in the regulation of the intracellular balance of NAD and NADP, and is a key enzyme in the biosynthesis of NADP. Catalyzes specifically the phosphorylation on 2'-hydroxyl of the adenosine moiety of NAD to yield NADP. In Corynebacterium efficiens (strain DSM 44549 / YS-314 / AJ 12310 / JCM 11189 / NBRC 100395), this protein is NAD kinase.